The chain runs to 153 residues: Endoribonuclease YbeY (153 aa).

Zn(2+) contacts are provided by His118, His122, and His128.

This sequence belongs to the endoribonuclease YbeY family. The cofactor is Zn(2+).

The protein localises to the cytoplasm. In terms of biological role, single strand-specific metallo-endoribonuclease involved in late-stage 70S ribosome quality control and in maturation of the 3' terminus of the 16S rRNA. The chain is Endoribonuclease YbeY from Chloroflexus aggregans (strain MD-66 / DSM 9485).